Consider the following 1482-residue polypeptide: Cystic fibrosis transmembrane conductance regulator (1482 aa).

At 1-77 (MQRSPLEKAS…KLINALQRCF (77 aa)) the chain is on the cytoplasmic side. A helical transmembrane segment spans residues 78-98 (FWRFTFYGILLYLGEVTKAIQ). One can recognise an ABC transmembrane type-1 1 domain in the interval 81–365 (FTFYGILLYL…WAVQTWYDSL (285 aa)). At 99–122 (PLLLGRIIASYDPDNKMERSIAIY) the chain is on the extracellular side. Residues 123 to 146 (LGIGLCLLFIMRTLLLHPAIFGLH) form a helical membrane-spanning segment. Residues 147–195 (HIGMQMRIALFSLIYKKTLKLSSRVLDKISIGQLVSLLSNNLNKFDEGL) lie on the Cytoplasmic side of the membrane. A helical transmembrane segment spans residues 196–216 (ALAHFVWIAPLQVMLLMGLLW). Topologically, residues 217 to 222 (ELLQAS) are extracellular. The chain crosses the membrane as a helical span at residues 223 to 243 (AFCGLAFLIVLALLQAGLGRM). Topologically, residues 244–298 (MMKYRDQRAGKINERLVITSEMIENIQSVKAYCWEEAMEKMIENLRQTELRLTRK) are cytoplasmic. The chain crosses the membrane as a helical span at residues 299–319 (AAYVRYVNSSAFFFSGFFVVF). The Extracellular segment spans residues 320-339 (LSVLPYALIKGIILRKIFTT). The helical transmembrane segment at 340–358 (ISFCIVLRMAVTRQFPWAV) threads the bilayer. Topologically, residues 359–859 (QTWYDSLGAI…YLRYITVHKN (501 aa)) are cytoplasmic. ATP contacts are provided by residues W401, 458–465 (GSTGAGKT), and Q493. Positions 423-646 (SGDNRLFFSN…RPDFSSKLMG (224 aa)) constitute an ABC transporter 1 domain. Residue C524 is the site of S-palmitoyl cysteine attachment. 2 positions are modified to phosphoserine: S549 and S660. The tract at residues 654–832 (SAERRNSILT…EEINEEDLKE (179 aa)) is disordered R region. Position 670 is a phosphoserine; by PKA (S670). The residue at position 686 (S686) is a Phosphoserine. K688 is covalently cross-linked (Glycyl lysine isopeptide (Lys-Gly) (interchain with G-Cter in ubiquitin)). Phosphoserine is present on residues S700 and S712. At T717 the chain carries Phosphothreonine. A phosphoserine mark is found at S737, S768, S791, S796, and S814. Residues 860 to 880 (LIFVLIWCLVIFLAEVAASLV) form a helical membrane-spanning segment. Positions 860-1156 (LIFVLIWCLV…AVNSSIDVDS (297 aa)) constitute an ABC transmembrane type-1 2 domain. At 881–919 (AFWLIEKTRPQDKGNSTRSTNNTSPVIITSTSAFYMFYI) the chain is on the extracellular side. N895 and N901 each carry an N-linked (GlcNAc...) asparagine glycan. Residues 920–940 (YVGVADSLLALGFLRGLPLVH) form a discontinuously helical membrane-spanning segment. The Cytoplasmic segment spans residues 941–991 (TLITVSKILHQKMLHSVLHAPMSTLNTLKAGAILNRFSKDIAILDDLLPLT). The chain crosses the membrane as a helical span at residues 992–1012 (IFDFIQLVLIVIGAVVVVSIL). Topologically, residues 1013 to 1014 (KP) are extracellular. The chain crosses the membrane as a helical span at residues 1015 to 1035 (YIFLAAVPVIIAFVILRAYFL). The Cytoplasmic segment spans residues 1036-1096 (QTSQQLKQLE…TATWFLYLST (61 aa)). A helical membrane pass occupies residues 1097-1117 (LRWFQMRIEMIFVVFFVAVTF). The Extracellular portion of the chain corresponds to 1118 to 1131 (ISILTTGEGEGTVG). A helical transmembrane segment spans residues 1132-1152 (IILTLAMNIMSTLQWAVNSSI). Residues 1153–1482 (DVDSLMRSVS…AEEEVQDTRL (330 aa)) are Cytoplasmic-facing. One can recognise an ABC transporter 2 domain in the interval 1212-1445 (ITVKDLTAKY…KSLFQQAISP (234 aa)). ATP-binding positions include Y1221 and 1246–1253 (GRTGSGKS). The tract at residues 1388-1482 (RALKQAFADC…AEEEVQDTRL (95 aa)) is interaction with GORASP2. C1397 carries S-palmitoyl cysteine lipidation. Residues S1446 and S1458 each carry the phosphoserine modification. The tract at residues 1454-1482 (QRSSSKHRSRAQITALKEEAEEEVQDTRL) is disordered. Residues 1472–1482 (EAEEEVQDTRL) show a composition bias toward acidic residues. Positions 1480–1482 (TRL) match the PDZ-binding motif.

It belongs to the ABC transporter superfamily. ABCC family. CFTR transporter (TC 3.A.1.202) subfamily. As to quaternary structure, monomer; does not require oligomerization for channel activity. May form oligomers in the membrane. Interacts with SLC26A3, SLC26A6 and NHERF1. Interacts with SHANK2. Interacts with MYO6. Interacts (via C-terminus) with GOPC (via PDZ domain); this promotes CFTR internalization and thereby decreases channel activity. Interacts with SLC4A7 through NHERF1. Found in a complex with MYO5B and RAB11A. Interacts with ANO1. Interacts with SLC26A8. Interacts with AHCYL1; the interaction increases CFTR activity. Interacts with CSE1L. The core-glycosylated form interacts with GORASP2 (via PDZ GRASP-type 1 domain) in respone to ER stress. Interacts with MARCHF2; the interaction leads to CFTR ubiqtuitination and degradation. Interacts with ADGRG2. Post-translationally, N-glycosylated. Phosphorylated; cAMP treatment promotes phosphorylation and activates the channel. Dephosphorylation decreases the ATPase activity (in vitro). Phosphorylation at PKA sites activates the channel. Phosphorylation at PKC sites enhances the response to phosphorylation by PKA. Phosphorylated by AMPK; this inhibits channel activity. In terms of processing, ubiquitinated, leading to its degradation in the lysosome. Deubiquitination by USP10 in early endosomes enhances its endocytic recycling to the cell membrane. Ubiquitinated by RNF185 during ER stress. Ubiquitinated by MARCHF2.

The protein localises to the apical cell membrane. It localises to the early endosome membrane. The protein resides in the cell membrane. Its subcellular location is the recycling endosome membrane. It is found in the endoplasmic reticulum membrane. The protein localises to the nucleus. The enzyme catalyses ATP + H2O + closed Cl(-) channel = ADP + phosphate + open Cl(-) channel.. It catalyses the reaction chloride(in) = chloride(out). It carries out the reaction hydrogencarbonate(in) = hydrogencarbonate(out). The catalysed reaction is ATP + H2O = ADP + phosphate + H(+). In terms of biological role, epithelial ion channel that plays an important role in the regulation of epithelial ion and water transport and fluid homeostasis. Mediates the transport of chloride ions across the cell membrane. Possesses an intrinsic ATPase activity and utilizes ATP to gate its channel; the passive flow of anions through the channel is gated by cycles of ATP binding and hydrolysis by the ATP-binding domains. The ion channel is also permeable to HCO(3)(-); selectivity depends on the extracellular chloride concentration. Exerts its function also by modulating the activity of other ion channels and transporters. Contributes to the regulation of the pH and the ion content of the epithelial fluid layer. Modulates the activity of the epithelial sodium channel (ENaC) complex, in part by regulating the cell surface expression of the ENaC complex. May regulate bicarbonate secretion and salvage in epithelial cells by regulating the transporter SLC4A7. Can inhibit the chloride channel activity of ANO1. Plays a role in the chloride and bicarbonate homeostasis during sperm epididymal maturation and capacitation. The polypeptide is Cystic fibrosis transmembrane conductance regulator (Rhinolophus ferrumequinum (Greater horseshoe bat)).